A 1818-amino-acid chain; its full sequence is Integrin beta-4 (1818 aa).

Residues 1–28 (MAGPCCSPWVKLLLLAAMLSASLPGDLA) form the signal peptide. Over 29-712 (NRCKKAQVKS…HKKKDCPPGS (684 aa)) the chain is Extracellular. One can recognise a PSI domain in the interval 30-74 (RCKKAQVKSCTECIRVDKSCAYCTDELFKERRCNTQAELLAAGCR). Intrachain disulfides connect cysteine 31–cysteine 49, cysteine 39–cysteine 457, cysteine 42–cysteine 62, cysteine 52–cysteine 73, cysteine 246–cysteine 289, cysteine 459–cysteine 478, cysteine 470–cysteine 481, and cysteine 483–cysteine 492. The 179-residue stretch at 132–310 (DLYILMDFSN…KTQDYPSVPT (179 aa)) folds into the VWFA domain. Mg(2+)-binding residues include serine 140 and serine 142. Ca(2+) is bound by residues serine 142, aspartate 145, aspartate 146, and aspartate 177. Positions 195-200 (WPNSDP) are involved in NRG1- and IGF1-binding. Residues asparagine 229, aspartate 231, proline 233, and glutamate 234 each coordinate Ca(2+). Position 234 (glutamate 234) interacts with Mg(2+). Asparagine 328 carries an N-linked (GlcNAc...) asparagine glycan. Glutamate 351 serves as a coordination point for Ca(2+). I-EGF domains are found at residues 459–493 (CELQ…KTCN), 494–539 (CSTG…HFCE), 540–576 (YDNF…RSCD), and 577–617 (CPLS…TTCE). Residues 473–475 (RGD) carry the Cell attachment site motif. N-linked (GlcNAc...) asparagine glycosylation occurs at asparagine 493. Cystine bridges form between cysteine 494-cysteine 522, cysteine 505-cysteine 520, cysteine 514-cysteine 525, cysteine 527-cysteine 538, cysteine 545-cysteine 559, cysteine 553-cysteine 564, cysteine 566-cysteine 575, cysteine 577-cysteine 600, cysteine 584-cysteine 598, cysteine 592-cysteine 603, and cysteine 605-cysteine 616. Asparagine 581 carries N-linked (GlcNAc...) asparagine glycosylation. Asparagine 619 carries an N-linked (GlcNAc...) asparagine glycan. 4 disulfides stabilise this stretch: cysteine 628/cysteine 673, cysteine 634/cysteine 653, cysteine 637/cysteine 650, and cysteine 682/cysteine 708. Asparagine 697 carries N-linked (GlcNAc...) asparagine glycosylation. Residues 713–733 (FWWLIPLLIFLLLLLALLLLL) traverse the membrane as a helical segment. The palmitoylated on several cysteines stretch occupies residues 734–751 (CWKYCACCKACLGLLPCC). Topologically, residues 734–1818 (CWKYCACCKA…THMDQQFFQT (1085 aa)) are cytoplasmic. Phosphoserine is present on serine 773. In terms of domain architecture, Calx-beta spans 981–1086 (VNITIIKEQA…QVRRFQVQLS (106 aa)). The Cell attachment site signature appears at 1005 to 1007 (RGD). 2 positions are modified to phosphoserine: serine 1071 and serine 1121. The tract at residues 1115–1137 (INQTLSSPPPPHGDLGAPQNPNA) is disordered. 2 Fibronectin type-III domains span residues 1131-1220 (APQN…THQE) and 1224-1323 (EPGR…TQPK). The tract at residues 1402–1433 (LSASSGRSDEDGSVAGGVEGEGSGWIRGATPR) is disordered. Residues 1415 to 1426 (VAGGVEGEGSGW) are compositionally biased toward gly residues. Phosphoserine is present on residues serine 1451, serine 1454, and serine 1470. At threonine 1483 the chain carries Phosphothreonine. Serine 1490 is subject to Phosphoserine. Threonine 1526 is modified (phosphothreonine). 2 consecutive Fibronectin type-III domains span residues 1526–1621 (TPTR…VHPQ) and 1639–1735 (APGP…SQVG). Serine 1787 carries the phosphoserine modification.

It belongs to the integrin beta chain family. As to quaternary structure, heterodimer of an alpha and a beta subunit. Beta-4 associates with alpha-6. Interacts (via cytoplasmic region) with COL17A1 (via cytoplasmic region). Interacts (via cytoplasmic region) with DST isoform 3 (via N-terminus). Interacts (via cytoplasmic domain) with DST (via N-terminus). Interacts with RAC1. ITGA6:ITGB4 is found in a ternary complex with NRG1 and ERBB3. ITGA6:ITGB4 is found in a ternary complex with IGF1 and IGF1R. ITGA6:ITGB4 interacts with IGF2. Interacts with TMEM268; this interaction prevents ITGB4 degradation. In terms of processing, palmitoylated by DHHC3 at several cysteines of the membrane-proximal region, enhancing stability and cell surface expression. Palmitoylation also promotes secondary association with tertaspanins.

It is found in the cell membrane. It localises to the cell junction. Its subcellular location is the hemidesmosome. Integrin alpha-6/beta-4 is a receptor for laminin. It plays a critical structural role in the hemidesmosome of epithelial cells. Is required for the regulation of keratinocyte polarity and motility. ITGA6:ITGB4 binds to NRG1 (via EGF domain) and this binding is essential for NRG1-ERBB signaling. ITGA6:ITGB4 binds to IGF1 and this binding is essential for IGF1 signaling. ITGA6:ITGB4 binds to IGF2 and this binding is essential for IGF2 signaling. The polypeptide is Integrin beta-4 (Itgb4) (Mus musculus (Mouse)).